Consider the following 490-residue polypeptide: Cytochrome P450 2C7 (490 aa).

Arg-144 is modified (dimethylated arginine). Cys-435 is a heme binding site.

The protein belongs to the cytochrome P450 family. The cofactor is heme.

It is found in the endoplasmic reticulum membrane. It localises to the microsome membrane. It catalyses the reaction an organic molecule + reduced [NADPH--hemoprotein reductase] + O2 = an alcohol + oxidized [NADPH--hemoprotein reductase] + H2O + H(+). In terms of biological role, cytochromes P450 are a group of heme-thiolate monooxygenases. In liver microsomes, this enzyme is involved in an NADPH-dependent electron transport pathway. It oxidizes a variety of structurally unrelated compounds, including steroids, fatty acids, and xenobiotics. This Rattus norvegicus (Rat) protein is Cytochrome P450 2C7 (Cyp2c7).